The following is a 476-amino-acid chain: MEDDGYYLDTDLDLSFTSTATDRTFTSSSARSSLARSSLTLSFNDRLSTATTPSTTTSSAATTLHHRRYDPHWTSIRAATTLSSDGRLHLRHFKLVRHLGTGNLGRVFLCHLRDCPNPTGFALKVIDRDVLTAKKISHVETEAEILSLLDHPFLPTLYARIDASHYTCLLIDYCPNGDLHSLLRKQPNNRLPISPVRFFAAEVLVALEYLHALGIVYRDLKPENILIREDGHIMLSDFDLCFKADVVPTFRSRRFRRTSSSPRKTRRGGGCFSTEVEYEREEIVAEFAAEPVTAFSKSCVGTHEYLAPELVAGNGHGSGVDWWAFGIFLYEMLYGTTPFKGGTKEQTLRNIVSNDDVAFTLEEEGMVEAKDLIEKLLVKDPRKRLGCARGAQDIKRHEFFEGIKWPLIRNYKPPEIRGLVKKTKAHAGHVTAAVTPRRNKWLWWALSHLLRSKSLSKSSSKIQSNNNYYHYVGKKL.

In terms of domain architecture, Protein kinase spans phenylalanine 93 to phenylalanine 400. ATP contacts are provided by residues leucine 99 to valine 107 and lysine 124. The active-site Proton acceptor is the aspartate 219.

It belongs to the protein kinase superfamily. Ser/Thr protein kinase family. Expressed in root tips and lateral root primordia.

It is found in the cytoplasm. The protein localises to the cytosol. The enzyme catalyses L-seryl-[protein] + ATP = O-phospho-L-seryl-[protein] + ADP + H(+). It carries out the reaction L-threonyl-[protein] + ATP = O-phospho-L-threonyl-[protein] + ADP + H(+). In terms of biological role, serine/threonine-protein kinase involved in the regulation of auxin signaling. Acts as a positive regulator of cellular auxin efflux and regulates organ development by enhancing PIN-mediated polar auxin transport. Phosphorylates conserved serine residues in the PIN auxin efflux carriers. Phosphorylation of PIN proteins is required and sufficient for apical-basal PIN polarity that enables directional intercellular auxin fluxes, which mediate differential growth, tissue patterning and organogenesis. Acts as a suppressor of root waving. This is Serine/threonine-protein kinase WAG1 (WAG1) from Arabidopsis thaliana (Mouse-ear cress).